The sequence spans 785 residues: Endonuclease MutS2 (785 aa).

An ATP-binding site is contributed by 335–342 (GPNTGGKT). In terms of domain architecture, Smr spans 710 to 785 (LDLRGERYED…GNGVTIVEFK (76 aa)).

Belongs to the DNA mismatch repair MutS family. MutS2 subfamily. In terms of assembly, homodimer. Binds to stalled ribosomes, contacting rRNA.

Functionally, endonuclease that is involved in the suppression of homologous recombination and thus may have a key role in the control of bacterial genetic diversity. Acts as a ribosome collision sensor, splitting the ribosome into its 2 subunits. Detects stalled/collided 70S ribosomes which it binds and splits by an ATP-hydrolysis driven conformational change. Acts upstream of the ribosome quality control system (RQC), a ribosome-associated complex that mediates the extraction of incompletely synthesized nascent chains from stalled ribosomes and their subsequent degradation. Probably generates substrates for RQC. This is Endonuclease MutS2 from Listeria welshimeri serovar 6b (strain ATCC 35897 / DSM 20650 / CCUG 15529 / CIP 8149 / NCTC 11857 / SLCC 5334 / V8).